Reading from the N-terminus, the 179-residue chain is Coiled-coil domain-containing protein 32 (179 aa).

The tract at residues 36–65 (DNAFSDSFMDSHPAGESHTAAADSAVQPAG) is disordered. Residues 75-98 (EVYLASLEKKLRRIKGLNEEVTSK) adopt a coiled-coil conformation. Positions 158–179 (LIPPESQAEKPEAGDKPAAAEQ) are disordered.

Interacts with AP2S1; the interaction is direct and mediates association with adaptor protein complex 2 (AP-2).

The protein resides in the membrane. It localises to the coated pit. Functionally, regulates clathrin-mediated endocytsois of cargos such as transferrin probably through the association and modulation of adaptor protein complex 2 (AP-2). Has a role in ciliogenesis. Required for proper cephalic and left/right axis development. The polypeptide is Coiled-coil domain-containing protein 32 (Ccdc32) (Mus musculus (Mouse)).